The primary structure comprises 264 residues: Thymidylate synthase (264 aa).

R21 is a dUMP binding site. A (6R)-5,10-methylene-5,6,7,8-tetrahydrofolate-binding site is contributed by H51. 126 to 127 (RR) contributes to the dUMP binding site. C146 acts as the Nucleophile in catalysis. Residues 166-169 (RSCD), N177, and 207-209 (HLY) contribute to the dUMP site. (6R)-5,10-methylene-5,6,7,8-tetrahydrofolate is bound at residue D169. A263 contacts (6R)-5,10-methylene-5,6,7,8-tetrahydrofolate.

This sequence belongs to the thymidylate synthase family. Bacterial-type ThyA subfamily. In terms of assembly, homodimer.

It localises to the cytoplasm. The catalysed reaction is dUMP + (6R)-5,10-methylene-5,6,7,8-tetrahydrofolate = 7,8-dihydrofolate + dTMP. Its pathway is pyrimidine metabolism; dTTP biosynthesis. Its function is as follows. Catalyzes the reductive methylation of 2'-deoxyuridine-5'-monophosphate (dUMP) to 2'-deoxythymidine-5'-monophosphate (dTMP) while utilizing 5,10-methylenetetrahydrofolate (mTHF) as the methyl donor and reductant in the reaction, yielding dihydrofolate (DHF) as a by-product. This enzymatic reaction provides an intracellular de novo source of dTMP, an essential precursor for DNA biosynthesis. This is Thymidylate synthase from Cronobacter sakazakii (strain ATCC BAA-894) (Enterobacter sakazakii).